A 126-amino-acid polypeptide reads, in one-letter code: Small ribosomal subunit protein uS11 (126 aa).

It belongs to the universal ribosomal protein uS11 family. Part of the 30S ribosomal subunit.

Located on the platform of the 30S subunit. The polypeptide is Small ribosomal subunit protein uS11 (Methanosarcina mazei (strain ATCC BAA-159 / DSM 3647 / Goe1 / Go1 / JCM 11833 / OCM 88) (Methanosarcina frisia)).